The sequence spans 187 residues: MAPGSHLVLAASEDCSSTHCVSQVGAKSLGVYAVNYPASNDFASSDFPKTVIDGIRDAGSHIQSMAMSCPQTRQVLGGYSQGAAVAGYVTSAVVPPAVPVQAVPAPMAPEVANHVAAVTLFGAPSAQFLGQYGAPPIAIGPLYQPKTLQLCADGDSICGDGNSPVAHGLYAVNGMVGQGANFAASRL.

Residues Cys15 and Cys69 are joined by a disulfide bond. Ser80 acts as the Nucleophile in catalysis. Cysteines 151 and 158 form a disulfide. The active site involves Asp155. Residue His167 is the Proton donor/acceptor of the active site.

This sequence belongs to the cutinase family.

Its subcellular location is the cytoplasm. The protein resides in the cell membrane. It localises to the secreted. The protein localises to the cell wall. Its function is as follows. May have a role in cell wall processes. Does not exhibit cutinase activity. In Mycobacterium tuberculosis (strain ATCC 25618 / H37Rv), this protein is Probable carboxylesterase Culp7.